The following is a 497-amino-acid chain: Probable FAD-binding monooxygenase AlmA (497 aa).

The helical transmembrane segment at 4–24 (QVDVLIIGAGISGIGLAVHLS) threads the bilayer. Residues Ser-15, Glu-36, Asp-56, Phe-62, and Val-104 each contribute to the FAD site. 54–56 (RSD) is an NADP(+) binding site. NADP(+) contacts are provided by residues 184 to 190 (SGATAIT), 208 to 209 (RS), and 292 to 293 (RL). Val-395 provides a ligand contact to FAD.

It belongs to the FAD-binding monooxygenase family. FAD is required as a cofactor.

It is found in the cell membrane. It functions in the pathway hydrocarbon metabolism; alkane degradation. In terms of biological role, is involved in the degradation of n-alkanes with C chain lengths of 32 and longer. Allows Acinetobacter sp. strain DSM 17874 to grow on long-chain n-alkanes such as dotriacontane (C32H66) or hexatriacontane (C36H74) as a sole carbon source. The chain is Probable FAD-binding monooxygenase AlmA from Acinetobacter sp.